A 317-amino-acid polypeptide reads, in one-letter code: Sulfate adenylyltransferase subunit 2 (317 aa).

2 disordered regions span residues 1 to 21 (MPDS…APLD) and 298 to 317 (RAID…EGYF).

Belongs to the PAPS reductase family. CysD subfamily. In terms of assembly, heterodimer composed of CysD, the smaller subunit, and CysN.

The catalysed reaction is sulfate + ATP + H(+) = adenosine 5'-phosphosulfate + diphosphate. The protein operates within sulfur metabolism; hydrogen sulfide biosynthesis; sulfite from sulfate: step 1/3. Functionally, with CysN forms the ATP sulfurylase (ATPS) that catalyzes the adenylation of sulfate producing adenosine 5'-phosphosulfate (APS) and diphosphate, the first enzymatic step in sulfur assimilation pathway. APS synthesis involves the formation of a high-energy phosphoric-sulfuric acid anhydride bond driven by GTP hydrolysis by CysN coupled to ATP hydrolysis by CysD. This chain is Sulfate adenylyltransferase subunit 2, found in Rhizobium johnstonii (strain DSM 114642 / LMG 32736 / 3841) (Rhizobium leguminosarum bv. viciae).